The sequence spans 395 residues: Transcription termination/antitermination protein NusA (395 aa).

Residues 137-201 (NSVLMGQVIL…TKKGLLLELS (65 aa)) enclose the S1 motif domain. KH domains are found at residues 243–291 (SHNA…TLAL) and 331–378 (KVRL…NESE).

It belongs to the NusA family. In terms of assembly, monomer. Binds directly to the core enzyme of the DNA-dependent RNA polymerase and to nascent RNA.

Its subcellular location is the cytoplasm. Its function is as follows. Participates in both transcription termination and antitermination. This chain is Transcription termination/antitermination protein NusA, found in Helicobacter pylori (strain ATCC 700392 / 26695) (Campylobacter pylori).